A 76-amino-acid chain; its full sequence is uncharacterized protein (76 aa).

The disordered stretch occupies residues 1–24 (MPLRLCQGRKDRASDPVRDDGSPP). Over residues 8 to 22 (GRKDRASDPVRDDGS) the composition is skewed to basic and acidic residues.

This is an uncharacterized protein from Dryophytes versicolor (chameleon treefrog).